The chain runs to 118 residues: UPF0342 protein BpOF4_11360 (118 aa).

This sequence belongs to the UPF0342 family.

This is UPF0342 protein BpOF4_11360 from Alkalihalophilus pseudofirmus (strain ATCC BAA-2126 / JCM 17055 / OF4) (Bacillus pseudofirmus).